A 513-amino-acid chain; its full sequence is Histidine ammonia-lyase (513 aa).

Positions 145-147 (ASG) form a cross-link, 5-imidazolinone (Ala-Gly). Residue serine 146 is modified to 2,3-didehydroalanine (Ser).

This sequence belongs to the PAL/histidase family. Contains an active site 4-methylidene-imidazol-5-one (MIO), which is formed autocatalytically by cyclization and dehydration of residues Ala-Ser-Gly.

The protein localises to the cytoplasm. It catalyses the reaction L-histidine = trans-urocanate + NH4(+). The protein operates within amino-acid degradation; L-histidine degradation into L-glutamate; N-formimidoyl-L-glutamate from L-histidine: step 1/3. In Vibrio vulnificus (strain YJ016), this protein is Histidine ammonia-lyase.